Here is a 594-residue protein sequence, read N- to C-terminus: Adenine deaminase 1 (594 aa).

It belongs to the metallo-dependent hydrolases superfamily. Adenine deaminase family. The cofactor is Mn(2+).

It carries out the reaction adenine + H2O + H(+) = hypoxanthine + NH4(+). This is Adenine deaminase 1 from Latilactobacillus sakei subsp. sakei (strain 23K) (Lactobacillus sakei subsp. sakei).